A 219-amino-acid chain; its full sequence is Thiamine-phosphate synthase (219 aa).

4-amino-2-methyl-5-(diphosphooxymethyl)pyrimidine is bound by residues 44–48 (QFREK) and asparagine 79. Mg(2+) is bound by residues aspartate 80 and aspartate 99. Serine 117 is a 4-amino-2-methyl-5-(diphosphooxymethyl)pyrimidine binding site. 2-[(2R,5Z)-2-carboxy-4-methylthiazol-5(2H)-ylidene]ethyl phosphate is bound at residue 143–145 (TST). 4-amino-2-methyl-5-(diphosphooxymethyl)pyrimidine is bound at residue lysine 146. 2-[(2R,5Z)-2-carboxy-4-methylthiazol-5(2H)-ylidene]ethyl phosphate is bound by residues glycine 175 and 195-196 (IS).

Belongs to the thiamine-phosphate synthase family. Mg(2+) is required as a cofactor.

The catalysed reaction is 2-[(2R,5Z)-2-carboxy-4-methylthiazol-5(2H)-ylidene]ethyl phosphate + 4-amino-2-methyl-5-(diphosphooxymethyl)pyrimidine + 2 H(+) = thiamine phosphate + CO2 + diphosphate. The enzyme catalyses 2-(2-carboxy-4-methylthiazol-5-yl)ethyl phosphate + 4-amino-2-methyl-5-(diphosphooxymethyl)pyrimidine + 2 H(+) = thiamine phosphate + CO2 + diphosphate. It carries out the reaction 4-methyl-5-(2-phosphooxyethyl)-thiazole + 4-amino-2-methyl-5-(diphosphooxymethyl)pyrimidine + H(+) = thiamine phosphate + diphosphate. Its pathway is cofactor biosynthesis; thiamine diphosphate biosynthesis; thiamine phosphate from 4-amino-2-methyl-5-diphosphomethylpyrimidine and 4-methyl-5-(2-phosphoethyl)-thiazole: step 1/1. Its function is as follows. Condenses 4-methyl-5-(beta-hydroxyethyl)thiazole monophosphate (THZ-P) and 2-methyl-4-amino-5-hydroxymethyl pyrimidine pyrophosphate (HMP-PP) to form thiamine monophosphate (TMP). This is Thiamine-phosphate synthase from Bacillus cereus (strain ZK / E33L).